A 196-amino-acid polypeptide reads, in one-letter code: Large ribosomal subunit protein eL15 (196 aa).

A disordered region spans residues Asp-153–Lys-196. The segment covering Arg-159–Arg-172 has biased composition (basic residues).

This sequence belongs to the eukaryotic ribosomal protein eL15 family.

The protein is Large ribosomal subunit protein eL15 of Methanosarcina acetivorans (strain ATCC 35395 / DSM 2834 / JCM 12185 / C2A).